Here is a 190-residue protein sequence, read N- to C-terminus: Peptidyl-tRNA hydrolase (190 aa).

Y14 is a tRNA binding site. H19 functions as the Proton acceptor in the catalytic mechanism. The tRNA site is built by Y64, N66, and N112.

The protein belongs to the PTH family. As to quaternary structure, monomer.

The protein localises to the cytoplasm. It catalyses the reaction an N-acyl-L-alpha-aminoacyl-tRNA + H2O = an N-acyl-L-amino acid + a tRNA + H(+). Functionally, hydrolyzes ribosome-free peptidyl-tRNAs (with 1 or more amino acids incorporated), which drop off the ribosome during protein synthesis, or as a result of ribosome stalling. In terms of biological role, catalyzes the release of premature peptidyl moieties from peptidyl-tRNA molecules trapped in stalled 50S ribosomal subunits, and thus maintains levels of free tRNAs and 50S ribosomes. The sequence is that of Peptidyl-tRNA hydrolase from Chlorobium limicola (strain DSM 245 / NBRC 103803 / 6330).